A 238-amino-acid polypeptide reads, in one-letter code: MRIIGLTGGVGTGKSTVARILEQHGIPVADADQMARQALAVGSPIRERVLERYGKVIQTPSGDLDRRRLGQIVFADAAERAWLEAQIHPFVRAQLQDFLSALAEQSSKVHGVPLEEEPASQKRSGVGFSSGQGSQTVCLMIPLLFEAHMENWASEIWVVTCTPEQQRQRLARRDPLTPEEIEARIASQWPLAEKVRRADVVLDNSGSLAELEAQVKQALASAGQRPFASPPRAGYSDG.

A DPCK domain is found at Ile3–Ala233. Residue Gly11–Thr16 participates in ATP binding. Disordered regions lie at residues His110–Ser129 and Leu219–Gly238.

It belongs to the CoaE family.

It is found in the cytoplasm. The catalysed reaction is 3'-dephospho-CoA + ATP = ADP + CoA + H(+). Its pathway is cofactor biosynthesis; coenzyme A biosynthesis; CoA from (R)-pantothenate: step 5/5. In terms of biological role, catalyzes the phosphorylation of the 3'-hydroxyl group of dephosphocoenzyme A to form coenzyme A. The protein is Dephospho-CoA kinase of Synechococcus sp. (strain JA-2-3B'a(2-13)) (Cyanobacteria bacterium Yellowstone B-Prime).